A 295-amino-acid polypeptide reads, in one-letter code: Nucleotide-binding protein LACR_1047 (295 aa).

An ATP-binding site is contributed by G12–T19. GTP is bound at residue D63–S66.

Belongs to the RapZ-like family.

Its function is as follows. Displays ATPase and GTPase activities. This is Nucleotide-binding protein LACR_1047 from Lactococcus lactis subsp. cremoris (strain SK11).